Reading from the N-terminus, the 174-residue chain is Xanthine-guanine phosphoribosyltransferase (174 aa).

5-phospho-alpha-D-ribose 1-diphosphate-binding positions include 49-50 (RG) and 108-116 (DDLVDTGAT). D109 contributes to the Mg(2+) binding site. Guanine-binding residues include D112 and I155. Residues D112 and I155 each contribute to the xanthine site. GMP-binding positions include 112–116 (DTGAT) and 154–155 (WI).

This sequence belongs to the purine/pyrimidine phosphoribosyltransferase family. XGPT subfamily. In terms of assembly, homotetramer. Mg(2+) serves as cofactor.

It is found in the cell inner membrane. It catalyses the reaction GMP + diphosphate = guanine + 5-phospho-alpha-D-ribose 1-diphosphate. It carries out the reaction XMP + diphosphate = xanthine + 5-phospho-alpha-D-ribose 1-diphosphate. The enzyme catalyses IMP + diphosphate = hypoxanthine + 5-phospho-alpha-D-ribose 1-diphosphate. Its pathway is purine metabolism; GMP biosynthesis via salvage pathway; GMP from guanine: step 1/1. The protein operates within purine metabolism; XMP biosynthesis via salvage pathway; XMP from xanthine: step 1/1. In terms of biological role, purine salvage pathway enzyme that catalyzes the transfer of the ribosyl-5-phosphate group from 5-phospho-alpha-D-ribose 1-diphosphate (PRPP) to the N9 position of the 6-oxopurines guanine and xanthine to form the corresponding ribonucleotides GMP (guanosine 5'-monophosphate) and XMP (xanthosine 5'-monophosphate), with the release of PPi. To a lesser extent, also acts on hypoxanthine. This Rhodopseudomonas palustris (strain BisB18) protein is Xanthine-guanine phosphoribosyltransferase.